Here is a 443-residue protein sequence, read N- to C-terminus: D-lactate dehydrogenase (443 aa).

Over 1–182 (MSWIDELSKI…GGKTIKNSSG (182 aa)) the chain is Extracellular. Positions 32-209 (RAAENFVVVK…TKATIRLFPQ (178 aa)) constitute an FAD-binding PCMH-type domain. A helical transmembrane segment spans residues 183–203 (YSLLHLLVGSEGTLAVITKAT). Topologically, residues 204 to 383 (IRLFPQMRDM…WEKSYFEFRK (180 aa)) are cytoplasmic. Residues 384 to 404 (SLLSLAVSLGGVISGEHGIGA) form a helical membrane-spanning segment. Residues 405-443 (VKLSELEELFPEQFELMRQIKLLFDPKNILNPGKVVRKL) lie on the Extracellular side of the membrane.

Belongs to the FAD-binding oxidoreductase/transferase type 4 family. Requires FAD as cofactor. Zn(2+) serves as cofactor.

It localises to the cell membrane. It carries out the reaction (R)-lactate + A = pyruvate + AH2. In terms of biological role, catalyzes the dehydrogenation of (R)-lactate (D-lactate) to pyruvate. Is likely involved in the utilization of D-lactate as a sole source for both carbon and electrons for dissimilatory sulfate reduction. Cannot use L-lactate as substrate, and NAD(+), horse cytochrome c, methylene blue or dimethylnaphthoquinone as acceptors. Active in vitro with artificial electron acceptors such as 2,6-dichlorophenolindophenol (DCPIP); the physiological acceptor is not known, but potential acceptors include cytochromes or quinones. The sequence is that of D-lactate dehydrogenase from Archaeoglobus fulgidus (strain ATCC 49558 / DSM 4304 / JCM 9628 / NBRC 100126 / VC-16).